The primary structure comprises 292 residues: Fat storage-inducing transmembrane protein 1 (292 aa).

The Lumenal portion of the chain corresponds to Met-1–Arg-18. Residues Ala-19–Gly-39 form a helical membrane-spanning segment. Residues Ser-40–Arg-54 lie on the Cytoplasmic side of the membrane. Residues Leu-55 to Asn-75 traverse the membrane as a helical segment. At Pro-76 to Ser-94 the chain is on the lumenal side. Residues Ala-95–Thr-115 form a helical membrane-spanning segment. Topologically, residues Arg-116–Ala-141 are cytoplasmic. A helical membrane pass occupies residues Phe-142–Leu-162. At His-163 to Thr-187 the chain is on the lumenal side. The active site involves His-186. The chain crosses the membrane as a helical span at residues Phe-188–Leu-208. Residues Ala-209–Leu-220 are Cytoplasmic-facing. Residues Val-221 to Ile-241 traverse the membrane as a helical segment. Residues Tyr-242 to Lys-249 are Lumenal-facing. His-244 is an active-site residue. The helical transmembrane segment at Val-250–Gln-270 threads the bilayer. The Cytoplasmic segment spans residues Pro-271–Asn-292.

This sequence belongs to the FIT family. FIT1 subfamily.

It is found in the endoplasmic reticulum membrane. In terms of biological role, plays an important role in the formation of lipid droplets (LDs) which are storage organelles at the center of lipid and energy homeostasis. Directly binds to diacylglycerol (DAGs) and triacylglycerol. The polypeptide is Fat storage-inducing transmembrane protein 1 (Bos taurus (Bovine)).